The following is a 523-amino-acid chain: Arabinose import ATP-binding protein AraG (523 aa).

ABC transporter domains follow at residues 20–255 and 268–511; these read LAFR…MVGR and IGSE…MLRT. 52-59 is an ATP binding site; it reads GENGAGKS.

Belongs to the ABC transporter superfamily. Arabinose importer (TC 3.A.1.2.2) family. The complex is composed of two ATP-binding proteins (AraG), two transmembrane proteins (AraH) and a solute-binding protein (AraF).

The protein resides in the cell inner membrane. The enzyme catalyses L-arabinose(out) + ATP + H2O = L-arabinose(in) + ADP + phosphate + H(+). Functionally, part of the ABC transporter complex AraFGH involved in arabinose import. Responsible for energy coupling to the transport system. This is Arabinose import ATP-binding protein AraG from Yersinia pestis bv. Antiqua (strain Antiqua).